The primary structure comprises 88 residues: Probable oxaloacetate decarboxylase gamma chain (88 aa).

Residues 13 to 35 (LMFSGMGFVIIFLLILIWAIGIV) form a helical membrane-spanning segment.

Belongs to the OadG family. Heterotrimer of an alpha, a beta and a gamma subunit. Na(+) is required as a cofactor.

It localises to the cell membrane. It carries out the reaction oxaloacetate + 2 Na(+)(in) + H(+) = pyruvate + 2 Na(+)(out) + CO2. Its function is as follows. Catalyzes the decarboxylation of oxaloacetate coupled to Na(+) translocation. In Mannheimia succiniciproducens (strain KCTC 0769BP / MBEL55E), this protein is Probable oxaloacetate decarboxylase gamma chain.